Consider the following 83-residue polypeptide: U20-theraphotoxin-Cg1a 1 (83 aa).

Residues 1 to 21 (MKVSVLITLAVLGVMFVWTSA) form the signal peptide. Residues 22–47 (AELEERGSDQPAWLKSLERIFQSEER) constitute a propeptide that is removed on maturation. 3 disulfide bridges follow: Cys49–Cys63, Cys56–Cys68, and Cys62–Cys76.

Belongs to the neurotoxin 10 (Hwtx-1) family. 40 (Jztx-35) subfamily. Expressed by the venom gland.

The protein localises to the secreted. Probable ion channel inhibitor. In Chilobrachys guangxiensis (Chinese earth tiger tarantula), this protein is U20-theraphotoxin-Cg1a 1.